We begin with the raw amino-acid sequence, 938 residues long: Nitrate reductase (938 aa).

The 4Fe-4S Mo/W bis-MGD-type domain maps to 1-64; it reads MSVVQSSCAY…RLLDSLAQPN (64 aa). The [4Fe-4S] cluster site is built by C8, C11, C15, and C50.

It belongs to the prokaryotic molybdopterin-containing oxidoreductase family. NasA/NapA/NarB subfamily. The cofactor is [4Fe-4S] cluster. It depends on Mo-bis(molybdopterin guanine dinucleotide) as a cofactor.

Its subcellular location is the cytoplasm. It carries out the reaction nitrate + a quinol = a quinone + nitrite + H2O. Its pathway is nitrogen metabolism; nitrate reduction (assimilation). Functionally, nitrate reductase is a key enzyme involved in the first step of nitrate assimilation in plants, fungi and bacteria. This is Nitrate reductase from Shewanella frigidimarina (strain NCIMB 400).